Consider the following 257-residue polypeptide: Probable enoyl-CoA hydratase (257 aa).

This sequence belongs to the enoyl-CoA hydratase/isomerase family.

It carries out the reaction a (3S)-3-hydroxyacyl-CoA = a (2E)-enoyl-CoA + H2O. The catalysed reaction is a 4-saturated-(3S)-3-hydroxyacyl-CoA = a (3E)-enoyl-CoA + H2O. Could possibly oxidize fatty acids using specific components. This chain is Probable enoyl-CoA hydratase (fadB1), found in Rhodobacter capsulatus (strain ATCC BAA-309 / NBRC 16581 / SB1003).